The following is a 448-amino-acid chain: UDP-N-acetylmuramoylalanine--D-glutamate ligase (448 aa).

ATP is bound at residue 112–118 (GSNAKST).

Belongs to the MurCDEF family.

The protein resides in the cytoplasm. It catalyses the reaction UDP-N-acetyl-alpha-D-muramoyl-L-alanine + D-glutamate + ATP = UDP-N-acetyl-alpha-D-muramoyl-L-alanyl-D-glutamate + ADP + phosphate + H(+). Its pathway is cell wall biogenesis; peptidoglycan biosynthesis. In terms of biological role, cell wall formation. Catalyzes the addition of glutamate to the nucleotide precursor UDP-N-acetylmuramoyl-L-alanine (UMA). The protein is UDP-N-acetylmuramoylalanine--D-glutamate ligase of Acinetobacter baylyi (strain ATCC 33305 / BD413 / ADP1).